Consider the following 833-residue polypeptide: Leucine--tRNA ligase (833 aa).

The short motif at 41-52 (PYPSGAGLHVGH) is the 'HIGH' region element. Positions 610–614 (KMSKS) match the 'KMSKS' region motif. K613 provides a ligand contact to ATP.

Belongs to the class-I aminoacyl-tRNA synthetase family.

The protein localises to the cytoplasm. It catalyses the reaction tRNA(Leu) + L-leucine + ATP = L-leucyl-tRNA(Leu) + AMP + diphosphate. The chain is Leucine--tRNA ligase from Streptococcus equi subsp. zooepidemicus (strain MGCS10565).